We begin with the raw amino-acid sequence, 114 residues long: Probable prefoldin subunit 2 (114 aa).

It belongs to the prefoldin subunit beta family. In terms of assembly, heterohexamer of two PFD-alpha type and four PFD-beta type subunits.

In terms of biological role, binds specifically to cytosolic chaperonin (c-CPN) and transfers target proteins to it. Binds to nascent polypeptide chain and promotes folding in an environment in which there are many competing pathways for nonnative proteins. The protein is Probable prefoldin subunit 2 of Schizosaccharomyces pombe (strain 972 / ATCC 24843) (Fission yeast).